The chain runs to 265 residues: Lipopolysaccharide core heptose(I) kinase WaaP (265 aa).

Asp162 is an active-site residue.

It belongs to the protein kinase superfamily. KdkA/RfaP family. It depends on Mg(2+) as a cofactor.

It catalyses the reaction an L-alpha-D-Hep-(1-&gt;3)-L-alpha-D-Hep-(1-&gt;5)-[alpha-Kdo-(2-&gt;4)]-alpha-Kdo-(2-&gt;6)-lipid A + ATP = an L-alpha-D-Hep-(1-&gt;3)-4-O-phospho-L-alpha-D-Hep-(1-&gt;5)-[alpha-Kdo-(2-&gt;4)]-alpha-Kdo-(2-&gt;6)-lipid A + ADP + H(+). The enzyme catalyses L-alpha-D-Hep-(1-&gt;3)-L-alpha-D-Hep-(1-&gt;5)-[alpha-Kdo-(2-&gt;4)]-alpha-Kdo-(2-&gt;6)-lipid A (E. coli) + ATP = L-alpha-D-Hep-(1-&gt;3)-4-O-phospho-L-alpha-D-Hep-(1-&gt;5)-[alpha-Kdo-(2-&gt;4)]-alpha-Kdo-(2-&gt;6)-lipid A (E. coli) + ADP + H(+). It participates in bacterial outer membrane biogenesis; LPS core biosynthesis. Functionally, kinase involved in the biosynthesis of the core oligosaccharide region of lipopolysaccharide (LPS). Catalyzes the phosphorylation of heptose I (HepI), the first heptose added to the Kdo2-lipid A module. This chain is Lipopolysaccharide core heptose(I) kinase WaaP, found in Escherichia coli (strain K12).